The sequence spans 272 residues: Phosphonates import ATP-binding protein PhnC 1 (272 aa).

The 245-residue stretch at 2–246 (LRIQALTKTY…VLTSIYGEED (245 aa)) folds into the ABC transporter domain. 35–42 (GPSGAGKS) serves as a coordination point for ATP.

Belongs to the ABC transporter superfamily. Phosphonates importer (TC 3.A.1.9.1) family. The complex is composed of two ATP-binding proteins (PhnC), two transmembrane proteins (PhnE) and a solute-binding protein (PhnD).

The protein resides in the cell inner membrane. It catalyses the reaction phosphonate(out) + ATP + H2O = phosphonate(in) + ADP + phosphate + H(+). In terms of biological role, part of the ABC transporter complex PhnCDE involved in phosphonates import. Responsible for energy coupling to the transport system. The polypeptide is Phosphonates import ATP-binding protein PhnC 1 (Rhodopseudomonas palustris (strain BisB18)).